The chain runs to 324 residues: UPF0158 protein CPn_0518/CP_0235/CPj0518/CpB0539 (324 aa).

This sequence belongs to the UPF0158 family.

This is UPF0158 protein CPn_0518/CP_0235/CPj0518/CpB0539 from Chlamydia pneumoniae (Chlamydophila pneumoniae).